We begin with the raw amino-acid sequence, 552 residues long: CTP synthase (552 aa).

The segment at 1-265 (MTKYIFITGG…DEIVVRKLRL (265 aa)) is amidoligase domain. Residue S13 participates in CTP binding. S13 contacts UTP. ATP-binding positions include 14 to 19 (SLGKGI) and D71. D71 and E139 together coordinate Mg(2+). Residues 146 to 148 (DIE), 186 to 191 (KTKPTQ), and K222 each bind CTP. Residues 186 to 191 (KTKPTQ) and K222 each bind UTP. Residues 290 to 541 (TVAMVGKYVN…VRAARARSEG (252 aa)) enclose the Glutamine amidotransferase type-1 domain. L-glutamine is bound at residue G351. Catalysis depends on C378, which acts as the Nucleophile; for glutamine hydrolysis. L-glutamine is bound by residues 379 to 382 (LGMQ), E402, and R469. Catalysis depends on residues H514 and E516.

It belongs to the CTP synthase family. As to quaternary structure, homotetramer.

It carries out the reaction UTP + L-glutamine + ATP + H2O = CTP + L-glutamate + ADP + phosphate + 2 H(+). It catalyses the reaction L-glutamine + H2O = L-glutamate + NH4(+). The enzyme catalyses UTP + NH4(+) + ATP = CTP + ADP + phosphate + 2 H(+). Its pathway is pyrimidine metabolism; CTP biosynthesis via de novo pathway; CTP from UDP: step 2/2. Allosterically activated by GTP, when glutamine is the substrate; GTP has no effect on the reaction when ammonia is the substrate. The allosteric effector GTP functions by stabilizing the protein conformation that binds the tetrahedral intermediate(s) formed during glutamine hydrolysis. Inhibited by the product CTP, via allosteric rather than competitive inhibition. Its function is as follows. Catalyzes the ATP-dependent amination of UTP to CTP with either L-glutamine or ammonia as the source of nitrogen. Regulates intracellular CTP levels through interactions with the four ribonucleotide triphosphates. The sequence is that of CTP synthase from Methylococcus capsulatus (strain ATCC 33009 / NCIMB 11132 / Bath).